A 267-amino-acid polypeptide reads, in one-letter code: Outer membrane protein assembly factor BamD (267 aa).

A signal peptide spans methionine 1–alanine 16. A lipid anchor (N-palmitoyl cysteine) is attached at cysteine 17. The S-diacylglycerol cysteine moiety is linked to residue cysteine 17.

This sequence belongs to the BamD family. Part of the Bam complex.

The protein localises to the cell outer membrane. In terms of biological role, part of the outer membrane protein assembly complex, which is involved in assembly and insertion of beta-barrel proteins into the outer membrane. Required for efficient transformation of Neisseria gonorrhoeae by species-related DNA. The sequence is that of Outer membrane protein assembly factor BamD from Neisseria gonorrhoeae.